Reading from the N-terminus, the 330-residue chain is G-protein coupled receptor 74 (330 aa).

The next 7 helical transmembrane spans lie at 50-70 (LIVV…NLWL), 85-105 (FILI…IFSI), 121-141 (MVVF…LCFD), 160-180 (WVFC…QKAL), 210-230 (VAVS…CIFY), 252-272 (MLLF…LSFI), and 295-315 (LPLL…IYIL). Cys117 and Cys195 form a disulfide bridge.

Belongs to the G-protein coupled receptor 1 family.

The protein resides in the host membrane. In Equus caballus (Horse), this protein is G-protein coupled receptor 74 (74).